Reading from the N-terminus, the 269-residue chain is Phosphatidate cytidylyltransferase (269 aa).

The next 8 helical transmembrane spans lie at 13-33, 50-70, 81-101, 110-130, 138-158, 180-200, 201-221, and 247-267; these read LAAI…TILI, LKLV…FLLP, ISKM…TVLV, VGFI…FIEI, LTYI…AYFV, FAGG…VAQL, PIPY…GQLG, and ILDR…LLAL.

It belongs to the CDS family.

The protein resides in the cell membrane. It carries out the reaction a 1,2-diacyl-sn-glycero-3-phosphate + CTP + H(+) = a CDP-1,2-diacyl-sn-glycerol + diphosphate. The protein operates within phospholipid metabolism; CDP-diacylglycerol biosynthesis; CDP-diacylglycerol from sn-glycerol 3-phosphate: step 3/3. This Bacillus subtilis (strain 168) protein is Phosphatidate cytidylyltransferase (cdsA).